Reading from the N-terminus, the 410-residue chain is Putative F-box/kelch-repeat protein At1g15680 (410 aa).

The F-box domain occupies 13–58; sequence CKRRIELPEELLAEIVARLPFISITRFKSVCKGWRSLIESTYFRHL. 2 Kelch repeats span residues 177 to 227 and 274 to 327; these read VVCM…SLKK and AYTT…YFPV.

The polypeptide is Putative F-box/kelch-repeat protein At1g15680 (Arabidopsis thaliana (Mouse-ear cress)).